Consider the following 145-residue polypeptide: LIM domain only protein 3 (145 aa).

LIM zinc-binding domains lie at 11–73 (KGCA…LFGT) and 75–137 (GNCA…GLMK).

In Rattus norvegicus (Rat), this protein is LIM domain only protein 3 (Lmo3).